A 114-amino-acid polypeptide reads, in one-letter code: Macrophage migration inhibitory factor homolog (114 aa).

Residue P2 is the Proton acceptor; via imino nitrogen of the active site. Substrate contacts are provided by K33 and I65.

The protein belongs to the MIF family.

It is found in the secreted. The enzyme catalyses L-dopachrome = 5,6-dihydroxyindole-2-carboxylate. The catalysed reaction is 3-phenylpyruvate = enol-phenylpyruvate. In terms of biological role, tautomerization of the methyl ester of L-dopachrome. Inhibits migration of human peripheral blood mononuclear cells. In Trichinella spiralis (Trichina worm), this protein is Macrophage migration inhibitory factor homolog.